Here is a 502-residue protein sequence, read N- to C-terminus: Betaine aldehyde dehydrogenase, chloroplastic (502 aa).

A chloroplast-targeting transit peptide spans Met-1–Ala-7. Gly-240–Gly-245 is an NAD(+) binding site. Catalysis depends on Glu-262, which acts as the Proton acceptor. The active-site Nucleophile is the Cys-296.

It belongs to the aldehyde dehydrogenase family. As to quaternary structure, homodimer.

It localises to the plastid. The protein resides in the chloroplast. The catalysed reaction is betaine aldehyde + NAD(+) + H2O = glycine betaine + NADH + 2 H(+). It functions in the pathway amine and polyamine biosynthesis; betaine biosynthesis via choline pathway; betaine from betaine aldehyde: step 1/1. In Atriplex hortensis (Mountain spinach), this protein is Betaine aldehyde dehydrogenase, chloroplastic.